The sequence spans 280 residues: Dopamine receptor-interacting protein 1 (280 aa).

As to quaternary structure, interacts with DRD1, the dopamine D1 receptor.

In terms of biological role, could be a regulator of the dopamine receptor signaling pathway. The sequence is that of Dopamine receptor-interacting protein 1 (DORIP1) from Bos taurus (Bovine).